A 232-amino-acid polypeptide reads, in one-letter code: RNA chaperone ProQ (232 aa).

The segment at 105–182 (EAKARVQAQR…REEQHTPVSD (78 aa)) is disordered. Residues 117-136 (QQAKKREAAAAAGEKEDAPR) show a composition bias toward basic and acidic residues. Residues 137 to 146 (RERKPRPTTP) show a composition bias toward basic residues. Basic and acidic residues predominate over residues 147–177 (RRKEGAERKPRAQKPVEKAPKTVKAPREEQH).

It belongs to the ProQ family.

The protein resides in the cytoplasm. Functionally, RNA chaperone with significant RNA binding, RNA strand exchange and RNA duplexing activities. May regulate ProP activity through an RNA-based, post-transcriptional mechanism. This Shigella flexneri serotype 5b (strain 8401) protein is RNA chaperone ProQ.